A 708-amino-acid polypeptide reads, in one-letter code: Double-strand break repair protein MRE11 (708 aa).

Ser2 bears the N-acetylserine mark. Ser2 bears the Phosphoserine mark. The Mn(2+) site is built by Asp20, His22, and Asp60. An interaction with NBN region spans residues 87–117; sequence RPVQFEILSDQSVNFGFSKFPWVNYQDGNLN. Asn128 lines the Mn(2+) pocket. His129 (proton donor) is an active-site residue. 3 residues coordinate Mn(2+): His217, His245, and His247. Lys255 is covalently cross-linked (Glycyl lysine isopeptide (Lys-Gly) (interchain with G-Cter in SUMO2)). Ser275 bears the Phosphoserine mark. Lys282 participates in a covalent cross-link: Glycyl lysine isopeptide (Lys-Gly) (interchain with G-Cter in UFM1). Lys339 is covalently cross-linked (Glycyl lysine isopeptide (Lys-Gly) (interchain with G-Cter in ubiquitin)). A Glycyl lysine isopeptide (Lys-Gly) (interchain with G-Cter in SUMO) cross-link involves residue Lys384. Lys416 participates in a covalent cross-link: Glycyl lysine isopeptide (Lys-Gly) (interchain with G-Cter in SUMO2). A Glycyl lysine isopeptide (Lys-Gly) (interchain with G-Cter in SUMO) cross-link involves residue Lys467. A Glycyl lysine isopeptide (Lys-Gly) (interchain with G-Cter in ubiquitin) cross-link involves residue Lys480. 2 disordered regions span residues 507–540 and 556–614; these read TRQK…ASAF and NDSD…AVSA. A compositionally biased stretch (basic residues) spans 569-579; the sequence is GRGRGRGRRGG. 9 positions are modified to asymmetric dimethylarginine: Arg570, Arg572, Arg574, Arg576, Arg577, Arg580, Arg587, Arg592, and Arg594. The short motif at 570–594 is the GAR element; it reads RGRGRGRRGGRGQNSASRGGSQRGR. Polar residues predominate over residues 599-614; sequence LETSTRSRNSKTAVSA. Ser619 bears the Phosphoserine mark. Lys625 is covalently cross-linked (Glycyl lysine isopeptide (Lys-Gly) (interchain with G-Cter in SUMO2)). The residue at position 641 (Ser641) is a Phosphoserine. Ser649 bears the Phosphoserine; by PLK1 mark. The tract at residues 651 to 708 is disordered; the sequence is VEEDIFPTTSKTDQRWSSTSSSKIMSQSQVSKGVDFESSEDDDDDPFMNTSSLRRNRR. Over residues 667–681 the composition is skewed to low complexity; it reads SSTSSSKIMSQSQVS. The residue at position 673 (Lys673) is an N6-lactoyllysine. Phosphoserine; by ATM is present on residues Ser676 and Ser678. Positions 687–696 are enriched in acidic residues; sequence ESSEDDDDDP. Residue Ser688 is modified to Phosphoserine; by CDK2. 2 positions are modified to phosphoserine: Ser689 and Ser701. Positions 698–708 are enriched in polar residues; sequence MNTSSLRRNRR.

It belongs to the MRE11/RAD32 family. Component of the MRN complex composed of two heterodimers RAD50 and MRE11 associated with a single NBN. The MRN complexes dimerize on DNA to form joined MRN-MRN oligomers required for DNA double-strand break repair. As part of the MRN complex, interacts with MCM9; the interaction recruits the complex to DNA repair sites. Component of the BASC complex, at least composed of BRCA1, MSH2, MSH6, MLH1, ATM, BLM, RAD50, MRE11 and NBN. Found in a complex with TERF2. Interacts with DCLRE1C/Artemis and DCLRE1B/Apollo. Interacts with ATF2. Interacts with EXD2. Interacts with MRNIP. Interacts with SAMHD1; leading to stimulate 3'-5' exonuclease activity. Interacts (when ubiquitinated) with UBQLN4 (via its UBA domain). Interacts with CYREN (via XLF motif). Interacts with GFI1; promoting methylation by PRMT1. Interacts with DYNLL1; inhibiting the activity of MRE11. Interacts with C1QBP and RAD50; interaction takes place in absence of DNA damage to form the MRC (MRE11-RAD50-C1QBP) complex that inhibits the activity of MRE11. Interacts with AGER/RAGE. AGER is recruited to DNA double-strand break sites where it enhances MRE11 endonuclease activity to promote DNA repair. As to quaternary structure, (Microbial infection) Interacts with herpes simplex virus 1 protein UL12. Requires Mn(2+) as cofactor. Post-translationally, phosphorylated by ATM at Ser-676 and Ser-678 in response to DNA damage, promoting MRE11 activity: phosphorylation activates MRE11 by preventing the interaction between MRE11 and the C1QBP inhibitor. Phosphorylation at Ser-649 by PLK1 primes for phosphorylation at Ser-688 by CK2, inhibiting recruitment of the MRN complex to DNA damage sites. Asymmetric dimethylation by PRMT1 promotes MRE11 exonuclease activity. In terms of processing, lactylation at Lys-673 by CREBBP/CBP in response to DNA damage promotes DNA binding and MRE11 activity. Post-translationally, acetylated on lysine residues by KAT2A /GCN5. Ubiquitinated following DNA damage. Ubiquitination triggers interaction with UBQLN4, leading to MRE11 removal from chromatin and degradation by the proteasome. Ubiquitinated at Lys-339 and Lys-480 by RNF126 via 'Lys-27'- and 'Lys-29'-linked polyubiquitin chains, promoting the exonuclease activity of MRE11. In terms of processing, SUMOylated by PIAS1, stabilizing MRE11 on chromatin during end resection. DeSUMOylated by SENP3 following removal from DNA double-strand breaks (DSBs). Post-translationally, ufmylation at Lys-282 promotes MRE11 activity and is required for activation of the ATM and ATR kinases by the MRN complex. (Microbial infection) Following infection by adenovirus E4, ubiquitinated and degraded by a SCF-like E3 ubiquitin ligase complex containing viral proteins E1B-55K and E4-ORF6.

It is found in the nucleus. Its subcellular location is the chromosome. It localises to the telomere. With respect to regulation, interaction with SAMHD1 stimulates the double-strand-specific 3'-5' exonuclease activity. RBBP8/CtIP specifically promotes the endonuclease activity to clear protein-DNA adducts and generate clean double-strand break ends. DYNLL1-binding inhibits the activity of MRE11. MRE11 activity is inhibited by C1QBP: in absence of DNA damage, C1QBP interacts with unphosphorylated MRE11, preventing formation and activity of the MRN complex. The mirin-derivative PFM39, specifically inhibits the 3'-5' exonuclease activity. The N-alkylated mirin-derivatives PFM03 and PFM01 specifically inhibit the endonuclease activity. Functionally, core component of the MRN complex, which plays a central role in double-strand break (DSB) repair, DNA recombination, maintenance of telomere integrity and meiosis. The MRN complex is involved in the repair of DNA double-strand breaks (DSBs) via homologous recombination (HR), an error-free mechanism which primarily occurs during S and G2 phases. The complex (1) mediates the end resection of damaged DNA, which generates proper single-stranded DNA, a key initial steps in HR, and is (2) required for the recruitment of other repair factors and efficient activation of ATM and ATR upon DNA damage. Within the MRN complex, MRE11 possesses both single-strand endonuclease activity and double-strand-specific 3'-5' exonuclease activity. After DSBs, MRE11 is loaded onto DSBs sites and cleaves DNA by cooperating with RBBP8/CtIP to initiate end resection. MRE11 first endonucleolytically cleaves the 5' strand at DNA DSB ends to prevent non-homologous end joining (NHEJ) and licence HR. It then generates a single-stranded DNA gap via 3' to 5' exonucleolytic degradation to create entry sites for EXO1- and DNA2-mediated 5' to 3' long-range resection, which is required for single-strand invasion and recombination. RBBP8/CtIP specifically promotes the endonuclease activity of MRE11 to clear protein-DNA adducts and generate clean double-strand break ends. MRE11 endonuclease activity is also enhanced by AGER/RAGE. The MRN complex is also required for DNA damage signaling via activation of the ATM and ATR kinases: the nuclease activity of MRE11 is not required to activate ATM and ATR. The MRN complex is also required for the processing of R-loops. The MRN complex is involved in the activation of the cGAS-STING pathway induced by DNA damage during tumorigenesis: the MRN complex acts by displacing CGAS from nucleosome sequestration, thereby activating it. In telomeres the MRN complex may modulate t-loop formation. Its function is as follows. MRE11 contains two DNA-binding domains (DBDs), enabling it to bind both single-stranded DNA (ssDNA) and double-stranded DNA (dsDNA). This is Double-strand break repair protein MRE11 from Homo sapiens (Human).